Reading from the N-terminus, the 94-residue chain is Large ribosomal subunit protein uL23 (94 aa).

The protein belongs to the universal ribosomal protein uL23 family. Part of the 50S ribosomal subunit. Contacts protein L29, and trigger factor when it is bound to the ribosome.

One of the early assembly proteins it binds 23S rRNA. One of the proteins that surrounds the polypeptide exit tunnel on the outside of the ribosome. Forms the main docking site for trigger factor binding to the ribosome. This chain is Large ribosomal subunit protein uL23, found in Lysinibacillus sphaericus (strain C3-41).